Reading from the N-terminus, the 111-residue chain is MGSSSFLVLMVSLALVTLVAAEGVKGGIEKAGVCPADNIRCFKSDPPQCHTDQDCLGERKCCYLHCGFKCVIPVKKLEEGGNKDEDVSGPCPEPGWEAKSPGSSSTGCPQK.

An N-terminal signal peptide occupies residues 1-23; sequence MGSSSFLVLMVSLALVTLVAAEG. Positions 27–74 constitute a WAP domain; sequence GIEKAGVCPADNIRCFKSDPPQCHTDQDCLGERKCCYLHCGFKCVIPV. 4 disulfides stabilise this stretch: Cys-34-Cys-62, Cys-41-Cys-66, Cys-49-Cys-61, and Cys-55-Cys-70. The interval 80–111 is disordered; it reads GGNKDEDVSGPCPEPGWEAKSPGSSSTGCPQK. The span at 101 to 111 shows a compositional bias: polar residues; that stretch reads PGSSSTGCPQK.

The protein resides in the secreted. In terms of biological role, antibacterial protein. Putative acid-stable proteinase inhibitor. The polypeptide is WAP four-disulfide core domain protein 12 (WFDC12) (Macaca mulatta (Rhesus macaque)).